A 241-amino-acid chain; its full sequence is Glucosamine-6-phosphate deaminase (241 aa).

Aspartate 67 (proton acceptor; for enolization step) is an active-site residue. The active-site For ring-opening step is the asparagine 136. Histidine 138 functions as the Proton acceptor; for ring-opening step in the catalytic mechanism. The active-site For ring-opening step is the glutamate 143.

It belongs to the glucosamine/galactosamine-6-phosphate isomerase family. NagB subfamily.

The enzyme catalyses alpha-D-glucosamine 6-phosphate + H2O = beta-D-fructose 6-phosphate + NH4(+). It functions in the pathway amino-sugar metabolism; N-acetylneuraminate degradation; D-fructose 6-phosphate from N-acetylneuraminate: step 5/5. Functionally, catalyzes the reversible isomerization-deamination of glucosamine 6-phosphate (GlcN6P) to form fructose 6-phosphate (Fru6P) and ammonium ion. In Halothermothrix orenii (strain H 168 / OCM 544 / DSM 9562), this protein is Glucosamine-6-phosphate deaminase.